The primary structure comprises 290 residues: Carbonic anhydrase-related protein (290 aa).

The interval 1–26 (MADLSFIEDTVAFPEKEEDEEEEEEG) is disordered. Residue Ser-5 is modified to Phosphoserine. Positions 16–26 (KEEDEEEEEEG) are enriched in acidic residues. Residues 27-289 (VEWGYEEGVE…LSDRVIRAAF (263 aa)) enclose the Alpha-carbonic anhydrase domain. His-87 serves as the catalytic Proton donor/acceptor. Zn(2+) contacts are provided by His-118 and His-141.

This sequence belongs to the alpha-carbonic anhydrase family.

Does not have a carbonic anhydrase catalytic activity. This Homo sapiens (Human) protein is Carbonic anhydrase-related protein (CA8).